The chain runs to 506 residues: WD repeat-containing protein 55 homolog (506 aa).

Positions 1–11 (MHRHDCFKTPA) are enriched in basic and acidic residues. 3 disordered regions span residues 1 to 20 (MHRH…DDID), 33 to 87 (QEVL…SDDS), and 100 to 132 (AKRR…DEDD). A compositionally biased stretch (acidic residues) spans 33–48 (QEVLNESESDDDEYDL). Positions 61 to 74 (GNISSNESISSDGS) are enriched in low complexity. Positions 78–87 (NAEDTDSDDS) are enriched in acidic residues. 6 WD repeats span residues 156–195 (RLED…NKLL), 200–239 (VHAK…LKKL), 243–281 (AHDD…AIFE), 284–323 (EVED…LYVQ), 326–365 (PYEE…YHCD), and 410–449 (QHNM…DFGD). Residues 480-506 (DMTKEQDDDDNDDGGNNTTAAGSNNVT) form a disordered region. Over residues 493–506 (GGNNTTAAGSNNVT) the composition is skewed to low complexity.

This sequence belongs to the WD repeat WDR55 family.

The protein is WD repeat-containing protein 55 homolog of Drosophila mojavensis (Fruit fly).